The sequence spans 390 residues: Altered inheritance of mitochondria protein 6 (390 aa).

Residues 1-26 (MLGLKGCLTILIGYVIAVCALFSSRG) form the signal peptide.

This sequence belongs to the AIM6 family.

In Saccharomyces cerevisiae (strain RM11-1a) (Baker's yeast), this protein is Altered inheritance of mitochondria protein 6 (AIM6).